The chain runs to 269 residues: Tryptophan synthase alpha chain (269 aa).

Active-site proton acceptor residues include E49 and D60.

The protein belongs to the TrpA family. As to quaternary structure, tetramer of two alpha and two beta chains.

The catalysed reaction is (1S,2R)-1-C-(indol-3-yl)glycerol 3-phosphate + L-serine = D-glyceraldehyde 3-phosphate + L-tryptophan + H2O. Its pathway is amino-acid biosynthesis; L-tryptophan biosynthesis; L-tryptophan from chorismate: step 5/5. The alpha subunit is responsible for the aldol cleavage of indoleglycerol phosphate to indole and glyceraldehyde 3-phosphate. The polypeptide is Tryptophan synthase alpha chain (Klebsiella aerogenes (Enterobacter aerogenes)).